Here is a 139-residue protein sequence, read N- to C-terminus: Putative pre-16S rRNA nuclease (139 aa).

The protein belongs to the YqgF nuclease family.

Its subcellular location is the cytoplasm. Functionally, could be a nuclease involved in processing of the 5'-end of pre-16S rRNA. The chain is Putative pre-16S rRNA nuclease from Proteus mirabilis (strain HI4320).